The sequence spans 208 residues: MTRVALLTTGRELSQAAPPARARTPLPVPTPRGERPDDGGHAPHRDRRVNQRRRQVGDRRAQRGVDEHPWRRPDERPNDHLPQRNSERPEGVRGQRIRDAGDEALTDHRPQSAPFDLCIEAMGAIDTQQRLGVIPACAPAEKAGRVTKVSSSGPNSTPLPAARIGPGTNNAPSAADTTTYARGAIGPVATTIALRTPSTWMTRATATR.

An N-terminal signal peptide occupies residues 1–16; sequence MTRVALLTTGRELSQA. Disordered stretches follow at residues 1-95 and 145-176; these read MTRV…VRGQ and RVTK…SAAD. Residues 16-25 show a composition bias toward low complexity; sequence AAPPARARTP. A compositionally biased stretch (basic and acidic residues) spans 32-43; it reads RGERPDDGGHAP. A compositionally biased stretch (basic residues) spans 44 to 54; that stretch reads HRDRRVNQRRR. Residues 55–95 are compositionally biased toward basic and acidic residues; it reads QVGDRRAQRGVDEHPWRRPDERPNDHLPQRNSERPEGVRGQ. Polar residues-rich tracts occupy residues 148-158 and 167-176; these read KVSSSGPNSTP and GTNNAPSAAD.

This is an uncharacterized protein from Mycobacterium tuberculosis (strain CDC 1551 / Oshkosh).